Here is a 171-residue protein sequence, read N- to C-terminus: MVILGIDPGSRITGFGIIKIHDNKLYYVASGCIRITETGTARRLKQIADGITEVVNTYAPTESAIEQIFMFQNPGAALKLGQARGVAMCTLAINNLEVSEYSAKQIKQAVVGTGGAAKSQVQHMVQSILGLSKKPPEDAADALAIAICHYHSSKSLARIAGASRVSQKRIR.

Residues Asp-7, Glu-66, and Asp-138 contribute to the active site. The Mg(2+) site is built by Asp-7, Glu-66, and Asp-138.

The protein belongs to the RuvC family. In terms of assembly, homodimer which binds Holliday junction (HJ) DNA. The HJ becomes 2-fold symmetrical on binding to RuvC with unstacked arms; it has a different conformation from HJ DNA in complex with RuvA. In the full resolvosome a probable DNA-RuvA(4)-RuvB(12)-RuvC(2) complex forms which resolves the HJ. Mg(2+) is required as a cofactor.

Its subcellular location is the cytoplasm. The catalysed reaction is Endonucleolytic cleavage at a junction such as a reciprocal single-stranded crossover between two homologous DNA duplexes (Holliday junction).. Functionally, the RuvA-RuvB-RuvC complex processes Holliday junction (HJ) DNA during genetic recombination and DNA repair. Endonuclease that resolves HJ intermediates. Cleaves cruciform DNA by making single-stranded nicks across the HJ at symmetrical positions within the homologous arms, yielding a 5'-phosphate and a 3'-hydroxyl group; requires a central core of homology in the junction. The consensus cleavage sequence is 5'-(A/T)TT(C/G)-3'. Cleavage occurs on the 3'-side of the TT dinucleotide at the point of strand exchange. HJ branch migration catalyzed by RuvA-RuvB allows RuvC to scan DNA until it finds its consensus sequence, where it cleaves and resolves the cruciform DNA. This is Crossover junction endodeoxyribonuclease RuvC from Francisella philomiragia subsp. philomiragia (strain ATCC 25017 / CCUG 19701 / FSC 153 / O#319-036).